The chain runs to 118 residues: UPF0342 protein BCE_0953 (118 aa).

This sequence belongs to the UPF0342 family.

This Bacillus cereus (strain ATCC 10987 / NRS 248) protein is UPF0342 protein BCE_0953.